The following is a 154-amino-acid chain: Large ribosomal subunit protein uL15 (154 aa).

Positions 1–61 (MDLSTLKPVA…GGQMPLMRRM (61 aa)) are disordered.

It belongs to the universal ribosomal protein uL15 family. Part of the 50S ribosomal subunit.

In terms of biological role, binds to the 23S rRNA. The chain is Large ribosomal subunit protein uL15 from Oenococcus oeni (strain ATCC BAA-331 / PSU-1).